The following is a 197-amino-acid chain: Phosphoheptose isomerase (197 aa).

The SIS domain maps to 37 to 197 (MLQCLMNDGK…CIDSVLLEGM (161 aa)). Residue 52 to 54 (NGG) participates in substrate binding. His-61 and Glu-65 together coordinate Zn(2+). Residues Glu-65, 94–95 (ND), 120–122 (STS), Ser-125, and Gln-175 each bind substrate. Zn(2+) contacts are provided by Gln-175 and His-183.

It belongs to the SIS family. GmhA subfamily. Homotetramer. The cofactor is Zn(2+).

It is found in the cytoplasm. It carries out the reaction 2 D-sedoheptulose 7-phosphate = D-glycero-alpha-D-manno-heptose 7-phosphate + D-glycero-beta-D-manno-heptose 7-phosphate. It functions in the pathway carbohydrate biosynthesis; D-glycero-D-manno-heptose 7-phosphate biosynthesis; D-glycero-alpha-D-manno-heptose 7-phosphate and D-glycero-beta-D-manno-heptose 7-phosphate from sedoheptulose 7-phosphate: step 1/1. Catalyzes the isomerization of sedoheptulose 7-phosphate in D-glycero-D-manno-heptose 7-phosphate. This Neisseria meningitidis serogroup C (strain 053442) protein is Phosphoheptose isomerase.